Reading from the N-terminus, the 233-residue chain is Leucyl/phenylalanyl-tRNA--protein transferase (233 aa).

Belongs to the L/F-transferase family.

The protein localises to the cytoplasm. It catalyses the reaction N-terminal L-lysyl-[protein] + L-leucyl-tRNA(Leu) = N-terminal L-leucyl-L-lysyl-[protein] + tRNA(Leu) + H(+). It carries out the reaction N-terminal L-arginyl-[protein] + L-leucyl-tRNA(Leu) = N-terminal L-leucyl-L-arginyl-[protein] + tRNA(Leu) + H(+). The catalysed reaction is L-phenylalanyl-tRNA(Phe) + an N-terminal L-alpha-aminoacyl-[protein] = an N-terminal L-phenylalanyl-L-alpha-aminoacyl-[protein] + tRNA(Phe). In terms of biological role, functions in the N-end rule pathway of protein degradation where it conjugates Leu, Phe and, less efficiently, Met from aminoacyl-tRNAs to the N-termini of proteins containing an N-terminal arginine or lysine. This is Leucyl/phenylalanyl-tRNA--protein transferase from Laribacter hongkongensis (strain HLHK9).